Reading from the N-terminus, the 517-residue chain is MSPLALVSVSDKKNIIPFCTELVEKFNYKILSSGGTAKHLMEAKIPVIKVADFTNSPEILGGRVKTLHPKIHGGILAKRTDEEHKKDIEAYDLELIELVVVNLYPFKKTVEKGSKWEDAIENIDIGGPSMIRSAAKNHKDVSVLVDPSQYQEFIEESKKGELKETYKAKLALEAFQHTADYDTAISNWIRKERGLQSSKYIESYPLIKTLRYGENPHQKAFWYGLNNIGWNSAEQLQGKELSYNNLLDLESALSTVLEFGYEEKDELTTETFASVILKHNNPCGASIGNSASQAFLNALKCDSVSAFGGIVAFNSNVDSETAINLKDIFLECVVAPSFDPEALEILKIKKNLRILKFSKDQIPNKNQTSTKSIMGGLLVQDTDNIEEKTESWITVTKKFPSTQDYLDLSFAWKICKHIKSNAIVIAKDQQTLGIGAGQMNRVGASKIALQAAKENGYGGVLASDGFFPFADTVELANEYGINSIIQPGGSIRDEESIEMCNLKGISMVFTNKRHFLH.

The MGS-like domain maps to 1 to 145 (MSPLALVSVS…KNHKDVSVLV (145 aa)).

The protein belongs to the PurH family.

The enzyme catalyses (6R)-10-formyltetrahydrofolate + 5-amino-1-(5-phospho-beta-D-ribosyl)imidazole-4-carboxamide = 5-formamido-1-(5-phospho-D-ribosyl)imidazole-4-carboxamide + (6S)-5,6,7,8-tetrahydrofolate. The catalysed reaction is IMP + H2O = 5-formamido-1-(5-phospho-D-ribosyl)imidazole-4-carboxamide. The protein operates within purine metabolism; IMP biosynthesis via de novo pathway; 5-formamido-1-(5-phospho-D-ribosyl)imidazole-4-carboxamide from 5-amino-1-(5-phospho-D-ribosyl)imidazole-4-carboxamide (10-formyl THF route): step 1/1. It functions in the pathway purine metabolism; IMP biosynthesis via de novo pathway; IMP from 5-formamido-1-(5-phospho-D-ribosyl)imidazole-4-carboxamide: step 1/1. In Prochlorococcus marinus subsp. pastoris (strain CCMP1986 / NIES-2087 / MED4), this protein is Bifunctional purine biosynthesis protein PurH.